Reading from the N-terminus, the 285-residue chain is ATP synthase gamma chain (285 aa).

The protein belongs to the ATPase gamma chain family. In terms of assembly, F-type ATPases have 2 components, CF(1) - the catalytic core - and CF(0) - the membrane proton channel. CF(1) has five subunits: alpha(3), beta(3), gamma(1), delta(1), epsilon(1). CF(0) has three main subunits: a, b and c.

Its subcellular location is the cell membrane. In terms of biological role, produces ATP from ADP in the presence of a proton gradient across the membrane. The gamma chain is believed to be important in regulating ATPase activity and the flow of protons through the CF(0) complex. The chain is ATP synthase gamma chain from Halalkalibacterium halodurans (strain ATCC BAA-125 / DSM 18197 / FERM 7344 / JCM 9153 / C-125) (Bacillus halodurans).